The sequence spans 187 residues: Ribosome-recycling factor (187 aa).

It belongs to the RRF family.

The protein localises to the cytoplasm. Its function is as follows. Responsible for the release of ribosomes from messenger RNA at the termination of protein biosynthesis. May increase the efficiency of translation by recycling ribosomes from one round of translation to another. This chain is Ribosome-recycling factor, found in Methylorubrum extorquens (strain CM4 / NCIMB 13688) (Methylobacterium extorquens).